The following is a 174-amino-acid chain: Bifunctional protein PyrR (174 aa).

The short motif at Val97–Thr109 is the PRPP-binding element.

This sequence belongs to the purine/pyrimidine phosphoribosyltransferase family. PyrR subfamily. Homodimer and homohexamer; in equilibrium.

The catalysed reaction is UMP + diphosphate = 5-phospho-alpha-D-ribose 1-diphosphate + uracil. Its function is as follows. Regulates transcriptional attenuation of the pyrimidine nucleotide (pyr) operon by binding in a uridine-dependent manner to specific sites on pyr mRNA. This disrupts an antiterminator hairpin in the RNA and favors formation of a downstream transcription terminator, leading to a reduced expression of downstream genes. Functionally, also displays a weak uracil phosphoribosyltransferase activity which is not physiologically significant. The protein is Bifunctional protein PyrR of Macrococcus caseolyticus (strain JCSC5402) (Macrococcoides caseolyticum).